A 533-amino-acid chain; its full sequence is uncharacterized protein (533 aa).

A disordered region spans residues Met-1 to Ser-26. 2 positions are modified to phosphoserine: Ser-20 and Ser-23. Tyr-25 is subject to Phosphotyrosine. Ser-26 is subject to Phosphoserine. 10 consecutive transmembrane segments (helical) span residues Ile-178 to Ile-198, Tyr-213 to Leu-230, Pro-242 to His-264, Ala-274 to Ser-296, Leu-313 to Ala-333, Ser-353 to Ser-373, Arg-394 to Phe-414, Ile-435 to Leu-455, Gly-466 to Val-486, and Ile-495 to Phe-515.

This sequence belongs to the multi antimicrobial extrusion (MATE) (TC 2.A.66.1) family.

The protein localises to the vacuole membrane. This is an uncharacterized protein from Schizosaccharomyces pombe (strain 972 / ATCC 24843) (Fission yeast).